The sequence spans 89 residues: Small ribosomal subunit protein uS15 (89 aa).

Belongs to the universal ribosomal protein uS15 family. Part of the 30S ribosomal subunit. Forms a bridge to the 50S subunit in the 70S ribosome, contacting the 23S rRNA.

Its function is as follows. One of the primary rRNA binding proteins, it binds directly to 16S rRNA where it helps nucleate assembly of the platform of the 30S subunit by binding and bridging several RNA helices of the 16S rRNA. In terms of biological role, forms an intersubunit bridge (bridge B4) with the 23S rRNA of the 50S subunit in the ribosome. This chain is Small ribosomal subunit protein uS15, found in Escherichia coli O139:H28 (strain E24377A / ETEC).